Consider the following 465-residue polypeptide: Cysteine--tRNA ligase (465 aa).

Cys-27 contributes to the Zn(2+) binding site. The short motif at 29-39 (PTVYDFIHIGN) is the 'HIGH' region element. 3 residues coordinate Zn(2+): Cys-207, His-232, and Glu-236. The short motif at 264 to 268 (KMSKS) is the 'KMSKS' region element. An ATP-binding site is contributed by Lys-267.

This sequence belongs to the class-I aminoacyl-tRNA synthetase family. As to quaternary structure, monomer. Requires Zn(2+) as cofactor.

It localises to the cytoplasm. The enzyme catalyses tRNA(Cys) + L-cysteine + ATP = L-cysteinyl-tRNA(Cys) + AMP + diphosphate. This Caldicellulosiruptor saccharolyticus (strain ATCC 43494 / DSM 8903 / Tp8T 6331) protein is Cysteine--tRNA ligase.